A 147-amino-acid chain; its full sequence is D-aminoacyl-tRNA deacylase (147 aa).

The Gly-cisPro motif, important for rejection of L-amino acids signature appears at 137 to 138; the sequence is GP.

The protein belongs to the DTD family. Homodimer.

The protein localises to the cytoplasm. It carries out the reaction glycyl-tRNA(Ala) + H2O = tRNA(Ala) + glycine + H(+). The catalysed reaction is a D-aminoacyl-tRNA + H2O = a tRNA + a D-alpha-amino acid + H(+). Its function is as follows. An aminoacyl-tRNA editing enzyme that deacylates mischarged D-aminoacyl-tRNAs. Also deacylates mischarged glycyl-tRNA(Ala), protecting cells against glycine mischarging by AlaRS. Acts via tRNA-based rather than protein-based catalysis; rejects L-amino acids rather than detecting D-amino acids in the active site. By recycling D-aminoacyl-tRNA to D-amino acids and free tRNA molecules, this enzyme counteracts the toxicity associated with the formation of D-aminoacyl-tRNA entities in vivo and helps enforce protein L-homochirality. The chain is D-aminoacyl-tRNA deacylase from Jannaschia sp. (strain CCS1).